Reading from the N-terminus, the 1164-residue chain is Receptor-like protein kinase BRI1-like 3 (1164 aa).

Positions 1–23 (MKQQWQFLILCLLVLFLTVDSRG) are cleaved as a signal peptide. At 24-772 (RRLLSDDVND…RSHAHPKKQS (749 aa)) the chain is on the extracellular side. An N-linked (GlcNAc...) asparagine glycan is attached at Asn32. The Cys pair 1 signature appears at 65–72 (CTWRGVSC). LRR repeat units follow at residues 77-98 (RVIG…NNLT), 102-123 (NLRS…SSSG), 125-146 (SLEV…DYVF), 151-173 (NLVS…PSAS), 176-197 (RITT…TFIA), 202-224 (SLKH…SFGL), 227-248 (NLTV…VSLS), 252-274 (LLET…DYWG), 278-300 (NLRQ…LSLL), 303-325 (TLEV…FTSC), 327-347 (SLQS…STVV), 352-375 (RITN…TNCS), 376-397 (NLRV…GFCS), 403-424 (VLEK…ELGK), 427-448 (SLKT…EIWT), 451-473 (KLSD…ICVD), 476-498 (NLET…ISKC), 500-523 (NMLW…GKLE), 524-546 (KLAI…LGNC), and 548-570 (NLIW…LASQ). Asn96 and Asn112 each carry an N-linked (GlcNAc...) asparagine glycan. Asn156 carries an N-linked (GlcNAc...) asparagine glycan. N-linked (GlcNAc...) asparagine glycosylation is found at Asn212, Asn227, and Asn257. Asn362 and Asn373 each carry an N-linked (GlcNAc...) asparagine glycan. Asn461 carries an N-linked (GlcNAc...) asparagine glycan. N-linked (GlcNAc...) asparagine glycans are attached at residues Asn532, Asn558, and Asn638. LRR repeat units follow at residues 640 to 662 (SMIY…YGAM), 664 to 686 (YLQV…FGGL), 688 to 711 (AIGV…GGLS), and 712 to 734 (FLSD…GQLT). Residues Asn722 and Asn743 are each glycosylated (N-linked (GlcNAc...) asparagine). The short motif at 748-755 (CGVPLPPC) is the Cys pair 2 element. The helical transmembrane segment at 773-793 (IATGMSAGIVFSFMCIVMLIM) threads the bilayer. At 794–1164 (ALYRARKVQK…LVEESRDKEP (371 aa)) the chain is on the cytoplasmic side. Residues Thr847 and Thr855 each carry the phosphothreonine modification. The region spanning 858 to 1136 (FSADSMIGSG…QVMTMFKELV (279 aa)) is the Protein kinase domain. Residues 864-872 (IGSGGFGDV) and Lys886 contribute to the ATP site. Tyr931 bears the Phosphotyrosine mark. Catalysis depends on Asp985, which acts as the Proton acceptor. Ser1020 is modified (phosphoserine). Tyr1028 is modified (phosphotyrosine).

Belongs to the protein kinase superfamily. Ser/Thr protein kinase family. Post-translationally, autophosphorylated on Tyr and Thr residues. As to expression, predominantly expressed in vascular tissues. Expressed only during postembryonic development with a very discrete pattern of expression, preferentially in the two protophloem cell files at the elongation zone of the root. The expression in these two cell files attenuates as the phloem cells differentiate in the upper root. In cotyledons and leaves, it is expressed in phloem cells, starting at the cotyledons and shoot apex, moving toward the basal part of the leaves, where the expression is weak. Expressed in the secondary and tertiary veins and in the upper part of the cotyledons and leaves. Weakly or not expressed in the inflorescence stems. Has some complementary expression with BRL1.

It localises to the cell membrane. It catalyses the reaction L-seryl-[protein] + ATP = O-phospho-L-seryl-[protein] + ADP + H(+). The enzyme catalyses L-threonyl-[protein] + ATP = O-phospho-L-threonyl-[protein] + ADP + H(+). It carries out the reaction L-tyrosyl-[protein] + ATP = O-phospho-L-tyrosyl-[protein] + ADP + H(+). Its function is as follows. Receptor with a dual specificity kinase activity acting on both serine/threonine- and tyrosine-containing substrates. Binds brassinolide. Regulates, in response to brassinosteroid binding, a signaling cascade involved in plant development. May be involved in cell growth and vascular differentiation. This chain is Receptor-like protein kinase BRI1-like 3 (BRL3), found in Arabidopsis thaliana (Mouse-ear cress).